A 439-amino-acid chain; its full sequence is Damage-control phosphatase ARMT1 (439 aa).

The residue at position 2 (Ala2) is an N-acetylalanine. Ser4 is subject to Phosphoserine. At Lys40 the chain carries N6-acetyllysine. Residues Asp251 and Asn252 each contribute to the Mn(2+) site. 251–252 serves as a coordination point for substrate; that stretch reads DN. The S-adenosyl-L-methionine site is built by Glu256 and Asp289. Asp289 is a binding site for Mn(2+). Substrate-binding positions include 365 to 369 and Lys402; that span reads DLNYR. A Subfamily III RTxK motif motif is present at residues 399–402; sequence RTLK.

It belongs to the damage-control phosphatase family. Sugar phosphate phosphatase III subfamily. Mn(2+) serves as cofactor. Ni(2+) is required as a cofactor. In terms of processing, automethylated.

It carries out the reaction beta-D-fructose 1-phosphate + H2O = D-fructose + phosphate. It catalyses the reaction beta-D-fructose 6-phosphate = dihydroxyacetone + D-glyceraldehyde 3-phosphate. The enzyme catalyses L-glutamyl-[protein] + S-adenosyl-L-methionine = [protein]-L-glutamate 5-O-methyl ester + S-adenosyl-L-homocysteine. Functionally, metal-dependent phosphatase that shows phosphatase activity against several substrates, including fructose-1-phosphate and fructose-6-phosphate. Its preference for fructose-1-phosphate, a strong glycating agent that causes DNA damage rather than a canonical yeast metabolite, suggests a damage-control function in hexose phosphate metabolism. Has also been shown to have O-methyltransferase activity that methylates glutamate residues of target proteins to form gamma-glutamyl methyl ester residues. Possibly methylates PCNA, suggesting it is involved in the DNA damage response. In Mus musculus (Mouse), this protein is Damage-control phosphatase ARMT1.